We begin with the raw amino-acid sequence, 168 residues long: Photosystem I assembly protein Ycf3 (168 aa).

TPR repeat units follow at residues 35-68 (AFTY…EIDP), 72-105 (SYIL…NSFL), and 120-153 (GEQA…TPGN).

This sequence belongs to the Ycf3 family.

It localises to the plastid. The protein resides in the chloroplast thylakoid membrane. Functionally, essential for the assembly of the photosystem I (PSI) complex. May act as a chaperone-like factor to guide the assembly of the PSI subunits. The protein is Photosystem I assembly protein Ycf3 of Jasminum nudiflorum (Winter jasmine).